A 996-amino-acid chain; its full sequence is Phototropin-1 (996 aa).

Residues methionine 1–valine 184 form a disordered region. Residues serine 23 and serine 58 each carry the phosphoserine modification. The span at glutamine 49–proline 59 shows a compositional bias: polar residues. Over residues glutamine 60–serine 70 the composition is skewed to pro residues. Over residues serine 141–threonine 153 the composition is skewed to polar residues. The segment covering serine 155–serine 166 has biased composition (low complexity). The PAS 1 domain maps to valine 184–glycine 257. Serine 185 bears the Phosphoserine mark. Asparagine 233 contributes to the FMN binding site. At cysteine 234 the chain carries S-4a-FMN cysteine. 7 residues coordinate FMN: arginine 235, glutamine 238, arginine 251, asparagine 266, asparagine 276, glutamine 297, and lysine 302. A PAC 1 domain is found at asparagine 258–leucine 312. Phosphoserine is present on residues serine 350, serine 376, and serine 410. Disordered regions lie at residues glutamate 351–phenylalanine 413 and tyrosine 434–aspartate 453. Residues tyrosine 434–aspartate 443 show a composition bias toward acidic residues. The span at arginine 444 to aspartate 453 shows a compositional bias: basic and acidic residues. Serine 450 is modified (phosphoserine). The PAS 2 domain occupies lysine 462–glutamine 535. Residue asparagine 511 coordinates FMN. Residue cysteine 512 is modified to S-4a-FMN cysteine. 7 residues coordinate FMN: arginine 513, glutamine 516, arginine 529, asparagine 544, asparagine 554, phenylalanine 556, and glutamine 575. Residues threonine 536–glutamate 590 enclose the PAC 2 domain. One can recognise a Protein kinase domain in the interval phenylalanine 663–phenylalanine 952. Residues leucine 669–valine 677 and lysine 692 contribute to the ATP site. Residue aspartate 788 is the Proton acceptor of the active site. The interval aspartate 806–glutamate 862 is activation loop.

It belongs to the protein kinase superfamily. AGC Ser/Thr protein kinase family. As to quaternary structure, homodimer; disulfide-linked. Interacts with PKS1, PKS2, RPT2, RPT3, PHOT2 and BLUS1. Subunit of a complex made of CAR6, PHOT1 and RPT3/NPH3. Associates with CBC1 and CBC2. Binds to BHP. It depends on FMN as a cofactor. Autophosphorylated at Ser-185, Ser-350 and Ser-410 in response to blue light irradiation. Post-translationally, 2 molecules of FMN bind covalently to cysteines after exposure to blue light and are reversed in the dark. As to expression, present in guard cells (at protein level).

The protein localises to the cell membrane. It is found in the cytoplasm. The catalysed reaction is L-seryl-[protein] + ATP = O-phospho-L-seryl-[protein] + ADP + H(+). It carries out the reaction L-threonyl-[protein] + ATP = O-phospho-L-threonyl-[protein] + ADP + H(+). Its activity is regulated as follows. Autophosphorylation is inhibited by staurosporine, but not by tyrphostin 9, sphingosine, GW5074 and BML-265. In terms of biological role, protein kinase that acts as a blue light (BL) photoreceptor in a signal-transduction pathway for photo-induced movements. Triggers the phosphorylation of AHA1 and AHA2 C-terminal penultimate Thr in guard cells to activate them and induce stomatal opening in response to blue light (BL). Also phosphorylates BLUS1, a kinase involved in stomatal opening. Mediates the phosphorylation of CBC1 in stomata, but not of CBC2, in response to blue light. Required for blue light mediated mRNA destabilization. Mediates calcium spiking of extracellular origin in response to a low rate of blue light. Also mediates rapid membrane depolarization and growth inhibition in response to blue light. Necessary for root phototropism. Involved in hypocotyl phototropism under a low rate but not under a high rate of blue light. Contributes to the chloroplast accumulation but seems not to be required for chloroplast translocation. Regulates stomata opening and photomorphogenesis response of leaf tissue. Confers sensitivity to drought. Not involved in hypocotyl elongation inhibition, anthocyanin accumulation or cotyledon opening. Involved in the regulation of leaf position and morphology via the phosphorylation of ABCB19 during blue light responses to modulate auxin distribution. The polypeptide is Phototropin-1 (Arabidopsis thaliana (Mouse-ear cress)).